The sequence spans 253 residues: Imidazole glycerol phosphate synthase subunit HisF (253 aa).

Catalysis depends on residues Asp-11 and Asp-130.

Belongs to the HisA/HisF family. In terms of assembly, heterodimer of HisH and HisF.

The protein resides in the cytoplasm. The enzyme catalyses 5-[(5-phospho-1-deoxy-D-ribulos-1-ylimino)methylamino]-1-(5-phospho-beta-D-ribosyl)imidazole-4-carboxamide + L-glutamine = D-erythro-1-(imidazol-4-yl)glycerol 3-phosphate + 5-amino-1-(5-phospho-beta-D-ribosyl)imidazole-4-carboxamide + L-glutamate + H(+). It functions in the pathway amino-acid biosynthesis; L-histidine biosynthesis; L-histidine from 5-phospho-alpha-D-ribose 1-diphosphate: step 5/9. Functionally, IGPS catalyzes the conversion of PRFAR and glutamine to IGP, AICAR and glutamate. The HisF subunit catalyzes the cyclization activity that produces IGP and AICAR from PRFAR using the ammonia provided by the HisH subunit. This chain is Imidazole glycerol phosphate synthase subunit HisF, found in Acidithiobacillus ferrooxidans (strain ATCC 23270 / DSM 14882 / CIP 104768 / NCIMB 8455) (Ferrobacillus ferrooxidans (strain ATCC 23270)).